Consider the following 478-residue polypeptide: Pyrrolysine--tRNA ligase (478 aa).

Residues 106-188 (VMPKSVARTP…TSAMPASTSA (83 aa)) form a disordered region. Over residues 122 to 132 (APVQTLPSESQ) the composition is skewed to polar residues. Positions 133–188 (PAPTTPISASTTAPASTSTTAPAPASTTAPAPASTTAPASASTTISTSAMPASTSA) are enriched in low complexity.

This sequence belongs to the class-II aminoacyl-tRNA synthetase family.

The protein resides in the cytoplasm. It carries out the reaction tRNA(Pyl) + L-pyrrolysine + ATP = L-pyrrolysyl-tRNA(Pyl) + AMP + diphosphate. In terms of biological role, catalyzes the attachment of pyrrolysine to tRNA(Pyl). Pyrrolysine is a lysine derivative encoded by the termination codon UAG. This chain is Pyrrolysine--tRNA ligase, found in Methanosarcina thermophila.